A 303-amino-acid chain; its full sequence is Counting factor 50 (303 aa).

The N-terminal stretch at 1 to 24 is a signal peptide; that stretch reads MNKMNNIFLIISSIILSIVIFVSG. The Ch-type lysozyme domain maps to 28–240; the sequence is IDFSSEISVG…CSTSSGSASG (213 aa). N-linked (GlcNAc...) asparagine glycosylation occurs at asparagine 67. The active site involves glutamate 125. Asparagine 170 carries an N-linked (GlcNAc...) asparagine glycan. The segment at 226 to 303 is S-G-S motif repeats; sequence GSGSGCSTSS…GSGTGSGSSI (78 aa). Residues 236 to 292 are compositionally biased toward low complexity; sequence GSASGSASGSASGSASGSNSGSSNSGSSNSGSSNSGSNSGSSNSGSGNSGSSNSGSA. The interval 236–303 is disordered; the sequence is GSASGSASGS…GSGTGSGSSI (68 aa). Gly residues predominate over residues 293–303; that stretch reads SGSGTGSGSSI.

It belongs to the glycosyl hydrolase 25 family. Monomer. Component of the counting factor (CF) complex, which includes cf60, cf50, cf45-1 and ctnA.

The protein localises to the secreted. The catalysed reaction is Hydrolysis of (1-&gt;4)-beta-linkages between N-acetylmuramic acid and N-acetyl-D-glucosamine residues in a peptidoglycan and between N-acetyl-D-glucosamine residues in chitodextrins.. In terms of biological role, cell-counting factor that limits the maximum size of the multicellular structure during aggregation. Has a very low lysozyme activity. The chain is Counting factor 50 (cf50-1) from Dictyostelium discoideum (Social amoeba).